We begin with the raw amino-acid sequence, 241 residues long: Oil body-associated protein 1B (241 aa).

Residues 1 to 12 (MEKAVHSSTTSG) are compositionally biased toward polar residues. The tract at residues 1–22 (MEKAVHSSTTSGPAVPGETTKT) is disordered.

The protein belongs to the OBAP family.

This Arabidopsis thaliana (Mouse-ear cress) protein is Oil body-associated protein 1B.